The primary structure comprises 122 residues: Beta-2-microglobulin (122 aa).

Residues 1–23 form the signal peptide; the sequence is MFLRSTFVAALVACLAYIHLGDA. The region spanning 28–117 is the Ig-like C1-type domain; that stretch reads PKVQIYSRNV…STLREATRFT (90 aa). A disulfide bridge links Cys-48 with Cys-103.

It belongs to the beta-2-microglobulin family. In terms of assembly, heterodimer of an alpha chain and a beta chain. Beta-2-microglobulin is the beta-chain of major histocompatibility complex class I molecules.

It is found in the secreted. Its function is as follows. Component of the class I major histocompatibility complex (MHC). Involved in the presentation of peptide antigens to the immune system. The polypeptide is Beta-2-microglobulin (b2m) (Acipenser baerii (Siberian sturgeon)).